The following is a 1360-amino-acid chain: Transmembrane protein 94 (1360 aa).

Residues 1 to 64 are Cytoplasmic-facing; it reads MDLREKHLGE…FLHLSNRCSC (64 aa). Residues 65–85 form a helical membrane-spanning segment; it reads FHWPGASLMLLAVLLLLCCCG. Residues 86 to 92 are Lumenal-facing; it reads GQPAGSQ. The helical transmembrane segment at 93–113 threads the bilayer; it reads GVELVNASALFLLLLLNLVLI. Over 114–273 the chain is Cytoplasmic; it reads GRQDRLKRRE…RPVTALDNER (160 aa). 2 positions are modified to phosphoserine: S221 and S225. Residues 274–294 traverse the membrane as a helical segment; the sequence is FTVQSVMLHYAVPVVLAGFLI. Residues 295–320 are Lumenal-facing; sequence TNALRFMFKAPGVTSWQYTLLQLQVN. A helical membrane pass occupies residues 321–341; it reads GMLPILPLLFPVLWVLATACG. At 342 to 1096 the chain is on the cytoplasmic side; the sequence is EARVLAQMSK…RHATYGIRKC (755 aa). The short motif at 417-422 is the DKQGIL element; it reads DKQGIL. Phosphoserine is present on residues S444, S445, and S454. Residues 487-545 form a disordered region; sequence EQERSDWLADGPKPSEPYPHHKGHGRSKHPSGSNVSFSRDTEGGEEEPSKAQPGTEGDP. Over residues 506 to 515 the composition is skewed to basic residues; the sequence is HHKGHGRSKH. A phosphoserine mark is found at S517, S522, S802, and S945. A helical transmembrane segment spans residues 1097–1117; that stretch reads FLFLLQCQLTLVVIQFLSCLV. Residues 1118–1124 lie on the Lumenal side of the membrane; the sequence is QLPPLLS. A helical transmembrane segment spans residues 1125–1145; it reads TTDILWLSCFCYPLLSISLLG. Residues 1146-1171 are Cytoplasmic-facing; the sequence is KPPHSSIMSMATGKNLQSIPKKTQHY. A helical transmembrane segment spans residues 1172–1192; that stretch reads FLLCFLLKFSLTISSCLVCFG. Topologically, residues 1193–1232 are lumenal; the sequence is FTLQSFCDSARARNLTNCSSVMLCSNDDRAPAWFEDFANG. 2 N-linked (GlcNAc...) asparagine glycosylation sites follow: N1206 and N1209. A helical transmembrane segment spans residues 1233–1253; that stretch reads LLSAQKLTAALIVLHTVFISI. At 1254 to 1269 the chain is on the cytoplasmic side; sequence THVHRTKPLWRKSPLT. A helical transmembrane segment spans residues 1270-1290; the sequence is NLWWAVTVPVVLLGQVVQTVV. The Lumenal portion of the chain corresponds to 1291-1310; the sequence is DLQLWTHRDSRVHFGLEDVP. The helical transmembrane segment at 1311 to 1331 threads the bilayer; it reads LLTWLLGCLSLVLVVVTNEIV. At 1332–1360 the chain is on the cytoplasmic side; it reads KLHEIRVRVRYQKRQKLQFETKLGMNSPF. Residues 1355 to 1357 carry the GMN; metal-binding motif motif; that stretch reads GMN.

Forms homooligomers.

Its subcellular location is the endoplasmic reticulum membrane. Its function is as follows. Could function in the uptake of Mg(2+) from the cytosol into the endoplasmic reticulum and regulate intracellular Mg(2+) homeostasis. This Mus musculus (Mouse) protein is Transmembrane protein 94.